The chain runs to 418 residues: RapA guanosine triphosphatase-activating protein B (418 aa).

In terms of domain architecture, Rap-GAP spans 142–407; sequence LVKVCEPEFN…EKASALINVI (266 aa). The disordered stretch occupies residues 304 to 339; that stretch reads NRVVGEQPSPSLTTTTTTTTTTSPTINSNSPTPSNK. Residues 311-338 are compositionally biased toward low complexity; the sequence is PSPSLTTTTTTTTTTSPTINSNSPTPSN.

In terms of biological role, mediates the deactivation of rap1 during multicellular development and is required for normal morphogenesis. Also required for the correct patterning of specific subtypes of prestalk cells. The protein is RapA guanosine triphosphatase-activating protein B (rapgapB) of Dictyostelium discoideum (Social amoeba).